A 535-amino-acid chain; its full sequence is High affinity immunoglobulin alpha and immunoglobulin mu Fc receptor (535 aa).

The signal sequence occupies residues 1-35 (MDQGAPAKPSEQKVPSLRTRWEILLLTLCLLHGSS). At 36-455 (MTPPHRRSHS…ALMEGESHTR (420 aa)) the chain is on the extracellular side. Residues 95–117 (GGAVTIHCHYAPSSVNRHQRKYW) are mediates immunoglobulin Fc fragment-binding. One can recognise an Ig-like V-type domain in the interval 95 to 189 (GGAVTIHCHY…DMLFFSVNLT (95 aa)). The cysteines at positions 102 and 173 are disulfide-linked. N-linked (GlcNAc...) asparagine glycosylation is present at Asn187. 2 disordered regions span residues 201 to 360 (AAPA…LISE) and 405 to 430 (EGRSIDGSLENTTEESSPPTPSQLSV). 2 stretches are compositionally biased toward low complexity: residues 208–220 (PTTASPGAASSAG) and 241–253 (TVPTTGTSKTTSS). The span at 291 to 328 (KSRSMSSTTQGVWLWSTRNSVTPSVTTSEGRRQGTTPE) shows a compositional bias: polar residues. A compositionally biased stretch (basic and acidic residues) spans 330-346 (DGPRDETDVRVSPEAPR). The segment covering 413-429 (LENTTEESSPPTPSQLS) has biased composition (polar residues). A helical transmembrane segment spans residues 456 to 476 (ILTPVSTVLALLLIAALILLK). The Cytoplasmic portion of the chain corresponds to 477-535 (RSLGRQRTSQKKERVPRITLIQMTHFLPDKLPDEGKNFQQSNLLPPQASLTVLENDPRP). The interval 507–535 (LPDEGKNFQQSNLLPPQASLTVLENDPRP) is disordered. Residues 513–528 (NFQQSNLLPPQASLTV) show a composition bias toward polar residues.

As to quaternary structure, interacts with IGHM; this interaction facilitates the endocytosis of IgM-coated microbes and IgM-antigen immune complexes. Post-translationally, N-glycosylated. Expressed in several tissues including thymus, spleen, liver, kidney, small and large intestine, testis and placenta. Expressed by oligodendrocytes, B-cells and macrophages but not granulocytes, T-cells or NK cells (at protein level).

Its subcellular location is the cell membrane. Its function is as follows. Functions as a receptor for the Fc fragment of IgA and IgM. Binds IgA and IgM with high affinity and mediates their endocytosis. May function in the immune response to microbes mediated by IgA and IgM. The chain is High affinity immunoglobulin alpha and immunoglobulin mu Fc receptor (Fcamr) from Mus musculus (Mouse).